Here is a 594-residue protein sequence, read N- to C-terminus: Tyrosine-protein kinase RYK (594 aa).

A signal peptide spans 1-34 (MRAGRGGVPGSGGLRAPPPPLLLLLLAMLPAAAP). At 35-211 (RSPALAAAPA…VHAAPTTSTR (177 aa)) the chain is on the extracellular side. Residues 50 to 178 (LYLSEDEVRR…VLNFKRRKMC (129 aa)) form the WIF domain. Residues Asn-123, Asn-158, Asn-162, Asn-166, and Asn-193 are each glycosylated (N-linked (GlcNAc...) asparagine). The chain crosses the membrane as a helical span at residues 212-239 (VFYISVGVCCAVIFLVAIILAVLHLHSM). At 240–594 (KRIELDDSIS…EFHAALGAYV (355 aa)) the chain is on the cytoplasmic side. Low complexity predominate over residues 250–266 (ASSSSQGLSQPSTQTTQ). The interval 250–283 (ASSSSQGLSQPSTQTTQYLRADTPNNATPITSSS) is disordered. Residues 272–283 (TPNNATPITSSS) show a composition bias toward polar residues. In terms of domain architecture, Protein kinase spans 317 to 590 (ITLKDVLQEG…QCLTEFHAAL (274 aa)). Residues 323 to 331 (LQEGTFGRI) and Lys-351 contribute to the ATP site. The active-site Proton acceptor is the Asp-452. Tyr-482 carries the post-translational modification Phosphotyrosine; by autocatalysis.

The protein belongs to the protein kinase superfamily. Tyr protein kinase family. Interacts with DVL1 (via PDZ domain). In terms of processing, proteolytically cleaved, in part by presenilin, in response to WNT3 stimulation. As to expression, is detected in all the tissues. Highest levels are seen in the ovary, lung and placenta.

It localises to the membrane. The protein localises to the nucleus. The protein resides in the cytoplasm. It carries out the reaction L-tyrosyl-[protein] + ATP = O-phospho-L-tyrosyl-[protein] + ADP + H(+). Functionally, may be a coreceptor along with FZD8 of Wnt proteins, such as WNT1, WNT3, WNT3A and WNT5A. Involved in neuron differentiation, axon guidance, corpus callosum establishment and neurite outgrowth. In response to WNT3 stimulation, receptor C-terminal cleavage occurs in its transmembrane region and allows the C-terminal intracellular product to translocate from the cytoplasm to the nucleus where it plays a crucial role in neuronal development. The sequence is that of Tyrosine-protein kinase RYK (Ryk) from Mus musculus (Mouse).